A 312-amino-acid polypeptide reads, in one-letter code: Olfactory receptor 5J2 (312 aa).

The Extracellular portion of the chain corresponds to 1–25; that stretch reads MADDNFTVVTEFILLGLTDHAELKA. An N-linked (GlcNAc...) asparagine glycan is attached at N5. A helical transmembrane segment spans residues 26-46; sequence VLFVVFLVIYAITLLRNLGMI. At 47 to 54 the chain is on the cytoplasmic side; it reads LLIQITSK. A helical membrane pass occupies residues 55–75; it reads LHTPMYFLLSCLSFVDACYSS. At 76 to 99 the chain is on the extracellular side; that stretch reads AIAPKMLVNLLVVKATISFSACMV. C97 and C189 are joined by a disulfide. A helical transmembrane segment spans residues 100-120; sequence QHLCFGVFITTEGFLLSVMAY. Residues 121–139 lie on the Cytoplasmic side of the membrane; that stretch reads DRYVAIVSPLLYTVAMSDR. The helical transmembrane segment at 140-160 threads the bilayer; it reads KCVELVTGSWIGGIVNTLIHT. At 161 to 196 the chain is on the extracellular side; that stretch reads ISLRRLSFCRLNAVSHFFCDIPSLLKLSCSDTSMNE. Residues 197–217 traverse the membrane as a helical segment; the sequence is LLLLTFSGVIAMATFLTVIIS. Topologically, residues 218 to 237 are cytoplasmic; sequence YIFIAFASLRIHSASGRQQA. The helical transmembrane segment at 238-258 threads the bilayer; it reads FSTCASHLTAVTIFYGTLIFS. The Extracellular segment spans residues 259-271; the sequence is YIQPSSQYFVEQE. Residues 272-292 traverse the membrane as a helical segment; it reads KVVSMFYTLGIPMLNLLIHSL. The Cytoplasmic segment spans residues 293 to 312; that stretch reads RNKDVKEAVKRAIEMKHFLC.

The protein belongs to the G-protein coupled receptor 1 family.

Its subcellular location is the cell membrane. Functionally, odorant receptor. In Homo sapiens (Human), this protein is Olfactory receptor 5J2 (OR5J2).